A 330-amino-acid chain; its full sequence is CRISPR-associated endonuclease Cas1 2 (330 aa).

Residues glutamate 156, histidine 222, and glutamate 237 each contribute to the Mn(2+) site.

Belongs to the CRISPR-associated endonuclease Cas1 family. As to quaternary structure, homodimer, forms a heterotetramer with a Cas2 homodimer. The cofactor is Mg(2+). Mn(2+) is required as a cofactor.

In terms of biological role, CRISPR (clustered regularly interspaced short palindromic repeat), is an adaptive immune system that provides protection against mobile genetic elements (viruses, transposable elements and conjugative plasmids). CRISPR clusters contain spacers, sequences complementary to antecedent mobile elements, and target invading nucleic acids. CRISPR clusters are transcribed and processed into CRISPR RNA (crRNA). Acts as a dsDNA endonuclease. Involved in the integration of spacer DNA into the CRISPR cassette. The sequence is that of CRISPR-associated endonuclease Cas1 2 from Thermodesulfovibrio yellowstonii (strain ATCC 51303 / DSM 11347 / YP87).